We begin with the raw amino-acid sequence, 252 residues long: 5-oxoprolinase subunit A (252 aa).

This sequence belongs to the LamB/PxpA family. Forms a complex composed of PxpA, PxpB and PxpC.

The catalysed reaction is 5-oxo-L-proline + ATP + 2 H2O = L-glutamate + ADP + phosphate + H(+). Catalyzes the cleavage of 5-oxoproline to form L-glutamate coupled to the hydrolysis of ATP to ADP and inorganic phosphate. In Mycolicibacterium gilvum (strain PYR-GCK) (Mycobacterium gilvum (strain PYR-GCK)), this protein is 5-oxoprolinase subunit A.